A 493-amino-acid polypeptide reads, in one-letter code: Glutamate--tRNA ligase (493 aa).

A 'HIGH' region motif is present at residues 10–20; it reads PSPTGDPHVGT. The 'KMSKS' region signature appears at 251 to 255; the sequence is KLSKR. Residue lysine 254 coordinates ATP.

It belongs to the class-I aminoacyl-tRNA synthetase family. Glutamate--tRNA ligase type 1 subfamily. Monomer.

It is found in the cytoplasm. The catalysed reaction is tRNA(Glu) + L-glutamate + ATP = L-glutamyl-tRNA(Glu) + AMP + diphosphate. Functionally, catalyzes the attachment of glutamate to tRNA(Glu) in a two-step reaction: glutamate is first activated by ATP to form Glu-AMP and then transferred to the acceptor end of tRNA(Glu). The sequence is that of Glutamate--tRNA ligase from Pseudomonas entomophila (strain L48).